The following is a 126-amino-acid chain: UPF0235 protein C15orf40 homolog (126 aa).

Residues 1 to 32 form a disordered region; sequence MPKKAGATSKGKNQTKEPETAPPAAGPVATDP. Serine 89 carries the post-translational modification Phosphoserine.

The protein belongs to the UPF0235 family.

This Mus musculus (Mouse) protein is UPF0235 protein C15orf40 homolog.